Consider the following 258-residue polypeptide: MKTPFGKAAAGQRSRTGAGHGSVSVTMIKRKAAHKKHRSRPTSQPRRNIVGCRIQHGWKDGDEPLTQWKGTVLDQVPVNPSLYLIKYDGFDCVYGLELHRDERVSSLEVLPNRVASSRISDTHLAEIMVGKAVEHIFETEEGSKNEWRGMVLAQAPVMNTWFYITYEKDPVLYMYQLLDDYKDGDLRILQDSNDSPLAEREPGEVIDSLVGKQVEYAKDDGSKRTGMVIHQVEAKPSVYFIKFDDDFHIYVYDLVKTS.

The interval 1-23 (MKTPFGKAAAGQRSRTGAGHGSV) is disordered. Tudor-like domain regions lie at residues 50–99 (VGCR…LELH), 129–178 (VGKA…YQLL), and 210–255 (VGKQ…YDLV). Histone H3K4me3 and H3R8me2a binding stretches follow at residues Glu-138 and 246 to 248 (DFH).

Belongs to the SPIN/STSY family. Interacts with C11orf84/SPINDOC.

Its function is as follows. Exhibits H3K4me3-binding activity. This Pongo abelii (Sumatran orangutan) protein is Spindlin-3 (SPIN3).